The sequence spans 256 residues: Ubiquinone/menaquinone biosynthesis C-methyltransferase UbiE (256 aa).

Residues Thr79, Asp100, and 128 to 129 (DA) each bind S-adenosyl-L-methionine.

This sequence belongs to the class I-like SAM-binding methyltransferase superfamily. MenG/UbiE family.

It carries out the reaction a 2-demethylmenaquinol + S-adenosyl-L-methionine = a menaquinol + S-adenosyl-L-homocysteine + H(+). It catalyses the reaction a 2-methoxy-6-(all-trans-polyprenyl)benzene-1,4-diol + S-adenosyl-L-methionine = a 5-methoxy-2-methyl-3-(all-trans-polyprenyl)benzene-1,4-diol + S-adenosyl-L-homocysteine + H(+). Its pathway is quinol/quinone metabolism; menaquinone biosynthesis; menaquinol from 1,4-dihydroxy-2-naphthoate: step 2/2. It participates in cofactor biosynthesis; ubiquinone biosynthesis. Functionally, methyltransferase required for the conversion of demethylmenaquinol (DMKH2) to menaquinol (MKH2) and the conversion of 2-polyprenyl-6-methoxy-1,4-benzoquinol (DDMQH2) to 2-polyprenyl-3-methyl-6-methoxy-1,4-benzoquinol (DMQH2). The protein is Ubiquinone/menaquinone biosynthesis C-methyltransferase UbiE of Pseudomonas paraeruginosa (strain DSM 24068 / PA7) (Pseudomonas aeruginosa (strain PA7)).